A 247-amino-acid polypeptide reads, in one-letter code: 3-deoxy-manno-octulosonate cytidylyltransferase (247 aa).

Belongs to the KdsB family.

The protein localises to the cytoplasm. The catalysed reaction is 3-deoxy-alpha-D-manno-oct-2-ulosonate + CTP = CMP-3-deoxy-beta-D-manno-octulosonate + diphosphate. The protein operates within nucleotide-sugar biosynthesis; CMP-3-deoxy-D-manno-octulosonate biosynthesis; CMP-3-deoxy-D-manno-octulosonate from 3-deoxy-D-manno-octulosonate and CTP: step 1/1. Its pathway is bacterial outer membrane biogenesis; lipopolysaccharide biosynthesis. Activates KDO (a required 8-carbon sugar) for incorporation into bacterial lipopolysaccharide in Gram-negative bacteria. The polypeptide is 3-deoxy-manno-octulosonate cytidylyltransferase (Methylorubrum extorquens (strain CM4 / NCIMB 13688) (Methylobacterium extorquens)).